A 59-amino-acid chain; its full sequence is Gonadotropin-releasing hormone receptor (59 aa).

Topologically, residues 1–2 (VA) are cytoplasmic. A helical membrane pass occupies residues 3–23 (FATSFTVCWTPYYVLGIWYWF). The Extracellular segment spans residues 24 to 37 (DPEMLNRVSDPVNH). A helical membrane pass occupies residues 38–58 (FFFLFAFLNPCFDPLIYGYFS). A topological domain (cytoplasmic) is located at residue L59.

Belongs to the G-protein coupled receptor 1 family.

Its subcellular location is the cell membrane. In terms of biological role, receptor for gonadotropin releasing hormone (GnRH) that mediates the action of GnRH to stimulate the secretion of the gonadotropic hormones luteinizing hormone (LH) and follicle-stimulating hormone (FSH). This receptor mediates its action by association with G-proteins that activate a phosphatidylinositol-calcium second messenger system. The sequence is that of Gonadotropin-releasing hormone receptor (GNRHR) from Macaca mulatta (Rhesus macaque).